The sequence spans 437 residues: Glutamate-1-semialdehyde 2,1-aminomutase (437 aa).

Lysine 279 carries the N6-(pyridoxal phosphate)lysine modification.

This sequence belongs to the class-III pyridoxal-phosphate-dependent aminotransferase family. HemL subfamily. As to quaternary structure, homodimer. It depends on pyridoxal 5'-phosphate as a cofactor.

It is found in the cytoplasm. It catalyses the reaction (S)-4-amino-5-oxopentanoate = 5-aminolevulinate. The protein operates within porphyrin-containing compound metabolism; protoporphyrin-IX biosynthesis; 5-aminolevulinate from L-glutamyl-tRNA(Glu): step 2/2. The chain is Glutamate-1-semialdehyde 2,1-aminomutase from Sorangium cellulosum (strain So ce56) (Polyangium cellulosum (strain So ce56)).